We begin with the raw amino-acid sequence, 90 residues long: Small ribosomal subunit protein bS20 (90 aa).

The protein belongs to the bacterial ribosomal protein bS20 family.

Functionally, binds directly to 16S ribosomal RNA. The protein is Small ribosomal subunit protein bS20 of Fusobacterium nucleatum subsp. nucleatum (strain ATCC 25586 / DSM 15643 / BCRC 10681 / CIP 101130 / JCM 8532 / KCTC 2640 / LMG 13131 / VPI 4355).